A 392-amino-acid polypeptide reads, in one-letter code: MAAPLRIQSDWAQALRKDEGEAWLSCHPPGKPTLYGSLTCQGIGLDGIPEVTASEGFIVNEINKKSIHVSCPKENVSSKFLAPYTTFSRIHTKSITCLDISSGGGLGVSSSADGSMKIWQASNGELRRVLEGHVFDVNCCRFFPSGLVVLSGGMDAQLKIWSAEDASCVVTFKGHKGGILDTAIVDRGKNVVSGSRDGTARLWDCGRSACLGVIADCGSSINGVAVGAADNSINLGSPEQMPSEREVGTESKMLLLAREDKKLQCLGLQSRQPLFLFIGSDAFNCCTFLSGFLLLAGTQDGNIYQLDVRNPRTPVQVIHRSGAPVMSLLSFRDGFIASQGDGSCFIVQQDLDYVIELTGADCDPVYKVATWEKQIYTCCRDGLVRRYQLSDL.

N-acetylalanine is present on Ala2. 5 WD repeats span residues 90-129 (IHTKSITCLDISSGGGLGVSSSADGSMKIWQASNGELRRV), 132-171 (GHVFDVNCCRFFPSGLVVLSGGMDAQLKIWSAEDASCVVT), 174-215 (GHKG…GVIA), 278-316 (IGSDAFNCCTFLSGFLLLAGTQDGNIYQLDVRNPRTPVQ), and 360-392 (ADCDPVYKVATWEKQIYTCCRDGLVRRYQLSDL).

This sequence belongs to the WD repeat PAAF1/RPN14 family. In terms of assembly, interacts with PSMC1, PSMC2, PSMC3, PSMC4, PSMC5 and PSMC6. Interacts with SUPT6H.

In terms of biological role, inhibits proteasome 26S assembly and activity by impairing the association of the 19S regulatory complex with the 20S core. Protects SUPT6H from proteasomal degradation. This is Proteasomal ATPase-associated factor 1 (PAAF1) from Bos taurus (Bovine).